The primary structure comprises 187 residues: Large ribosomal subunit protein uL22 (187 aa).

The protein belongs to the universal ribosomal protein uL22 family.

The chain is Large ribosomal subunit protein uL22 (RPL17) from Theileria annulata.